The chain runs to 284 residues: Tropomyosin (284 aa).

Residues M1–M284 adopt a coiled-coil conformation. Disordered stretches follow at residues L106 to Q134 and A186 to Y221. 2 stretches are compositionally biased toward basic and acidic residues: residues K112–Q134 and A186–K198.

This sequence belongs to the tropomyosin family. In terms of assembly, homodimer.

Functionally, tropomyosin, in association with the troponin complex, plays a central role in the calcium dependent regulation of muscle contraction. The polypeptide is Tropomyosin (TPM) (Branchiostoma belcheri (Amphioxus)).